The primary structure comprises 382 residues: MFLKAVVLTLSLVAVTGAQAEVSANQVATVVWDYFSQLSNNAKEAVEHLQKSELTQQLNALFQDKIGQVNTYTDNLQKKLVSFAMELHERLRKDSEKLKEEIRKELEELRAGLLPHADEVSRKIGDNMHELQQRLGPYAEELRTQVNTHAEHLRNQLTAHAQRMETTLRQNVGNLQASLTPYADELKAKIDQNVEELKGHLTPYADELKVKIDQNVEDLRRSLAPYAQDVQEKLNHQLEGLAFQMKKNAEELKAKISANADELRQKLVPVAEVVRGKLRDNTEELQKSLAELSSHLDRQVEEFRRNMGPYGETFNKALLQQVEELRQKLGPYAGDVEDHLSFLEKDLRDKVNSFFSTLEEKENQDMLVAVPELQLTPVPLES.

The first 20 residues, 1 to 20, serve as a signal peptide directing secretion; that stretch reads MFLKAVVLTLSLVAVTGAQA. Repeat copies occupy residues 33–54, 60–81, 82–103, 115–136, 137–158, 159–180, 181–202, 203–224, 225–246, 247–268, 269–286, 287–308, and 309–330. Residues 33 to 330 are 13 X 22 AA approximate tandem repeats; that stretch reads DYFSQLSNNA…QVEELRQKLG (298 aa).

Belongs to the apolipoprotein A1/A4/E family. In terms of assembly, homodimer. Post-translationally, phosphorylation sites are present in the extracellular medium.

It is found in the secreted. Its function is as follows. May have a role in chylomicrons and VLDL secretion and catabolism. Required for efficient activation of lipoprotein lipase by ApoC-II; potent activator of LCAT. Apoa-IV is a major component of HDL and chylomicrons. This chain is Apolipoprotein A-IV (APOA4), found in Mirounga angustirostris (Northern elephant seal).